A 479-amino-acid chain; its full sequence is FAD-dependent monooxygenase sdcF (479 aa).

In terms of domain architecture, FAD-binding PCMH-type spans 40-213 (AQLPPSCFVL…TLFDMEAFST (174 aa)). At H79 the chain carries Pros-8alpha-FAD histidine.

The protein belongs to the oxygen-dependent FAD-linked oxidoreductase family. FAD serves as cofactor.

Its pathway is secondary metabolite biosynthesis. In terms of biological role, FAD-dependent monooxygenase; part of the gene cluster that mediates the biosynthesis of the polyenes aspernidgulenes. The carbon backbone of aspernidgulenes is synthesized by the HR-PKS sdgA, which accepts acetyl-CoA as the starter unit and performs malonyl-CoA extensions as well as regioselective methylation and reduction. The resulting nonaketide offloads the HR-PKS by intramolecular lactonization to yield the 5,6-dihydro-alpha-pyrone-containing hexaenoic acids preaspernidgulene A1 and A2. The FAD-dependent monooxygenase sdgC then installs the first epoxide on the penultimate double bond. Subsequently, the FAD-dependent monooxygenase sdgF presumably generates a ketone intermediate through Meinwald rearrangement involving a hydride shift. Next, sdgC introduces another epoxide on the last olefin of the ketone intermediate after E/Z isomerization. The epoxide hydrolase sdgD then catalyzes stereospecific cyclization of the 5,6-dihydro-alpha-pyrone and opening of the epoxide ring to form an oxygenated trimethylcyclopentanone and an oxabicyclo[2.2.1]heptane unit. Finally, the bicyclic unit undergoes hydrolytic cleavage, either spontaneously or catalyzed by sdgD, to assemble the dimethyl-gamma-lactone moiety in aspernidgulene A1. This Emericella nidulans (strain FGSC A4 / ATCC 38163 / CBS 112.46 / NRRL 194 / M139) (Aspergillus nidulans) protein is FAD-dependent monooxygenase sdcF.